A 99-amino-acid polypeptide reads, in one-letter code: Ubiquitin-related modifier 1 (99 aa).

At Gly-99 the chain carries 1-thioglycine. Residue Gly-99 forms a Glycyl lysine isopeptide (Gly-Lys) (interchain with K-? in acceptor proteins) linkage.

It belongs to the URM1 family. As to quaternary structure, homodimer; homodimerization may provide an autoprotection to the highly active C-terminal residue before attacking its substrates. Interacts with NCS2 and NCS6. Forms a conjugate with the target protein AHP1. C-terminal thiocarboxylation occurs in 2 steps, it is first acyl-adenylated (-COAMP) via the hesA/moeB/thiF part of UBA4, then thiocarboxylated (-COSH) via the rhodanese domain of UBA4.

The protein localises to the cytoplasm. It localises to the nucleus. The protein operates within tRNA modification; 5-methoxycarbonylmethyl-2-thiouridine-tRNA biosynthesis. Functionally, acts as a sulfur carrier required for 2-thiolation of mcm(5)S(2)U at tRNA wobble positions of cytosolic tRNA(Lys), tRNA(Glu) and tRNA(Gln). Serves as sulfur donor in tRNA 2-thiolation reaction by being thiocarboxylated (-COSH) at its C-terminus by the MOCS3 homolog UBA4. The sulfur is then transferred to tRNA to form 2-thiolation of mcm(5)S(2)U. Prior mcm(5) tRNA modification by the elongator complex is required for 2-thiolation. Also acts as a ubiquitin-like protein (UBL) that is covalently conjugated via an isopeptide bond to lysine residues of target proteins such as AHP1. The thiocarboxylated form serves as substrate for conjugation and oxidative stress specifically induces the formation of UBL-protein conjugates. The protein is Ubiquitin-related modifier 1 of Saccharomyces cerevisiae (strain RM11-1a) (Baker's yeast).